The sequence spans 386 residues: Chorismate synthase (386 aa).

Residues R45 and R51 each contribute to the NADP(+) site. Residues 131 to 133 (RTS), 251 to 252 (QG), S294, 309 to 313 (KPIPS), and R335 each bind FMN.

The protein belongs to the chorismate synthase family. In terms of assembly, homotetramer. The cofactor is FMNH2.

It carries out the reaction 5-O-(1-carboxyvinyl)-3-phosphoshikimate = chorismate + phosphate. The protein operates within metabolic intermediate biosynthesis; chorismate biosynthesis; chorismate from D-erythrose 4-phosphate and phosphoenolpyruvate: step 7/7. Catalyzes the anti-1,4-elimination of the C-3 phosphate and the C-6 proR hydrogen from 5-enolpyruvylshikimate-3-phosphate (EPSP) to yield chorismate, which is the branch point compound that serves as the starting substrate for the three terminal pathways of aromatic amino acid biosynthesis. This reaction introduces a second double bond into the aromatic ring system. This chain is Chorismate synthase, found in Clostridium tetani (strain Massachusetts / E88).